We begin with the raw amino-acid sequence, 353 residues long: Photosystem II protein D1 (353 aa).

At threonine 2 the chain carries N-acetylthreonine. Threonine 2 carries the phosphothreonine modification. 3 helical membrane-spanning segments follow: residues 29 to 46 (YIGW…TATS), 118 to 133 (HFLL…EWEL), and 142 to 156 (WIAV…AATA). Residue histidine 118 coordinates chlorophyll a. Tyrosine 126 provides a ligand contact to pheophytin a. The [CaMn4O5] cluster site is built by aspartate 170 and glutamate 189. Residues 197-218 (FHMLGVAGVFGGSLFSAMHGSL) traverse the membrane as a helical segment. Histidine 198 serves as a coordination point for chlorophyll a. A quinone is bound by residues histidine 215 and 264 to 265 (SF). Histidine 215 lines the Fe cation pocket. Histidine 272 lines the Fe cation pocket. The helical transmembrane segment at 274–288 (FLAAWPVVGIWFTAL) threads the bilayer. [CaMn4O5] cluster contacts are provided by histidine 332, glutamate 333, aspartate 342, and alanine 344. Positions 345–353 (ALEVPSLNG) are excised as a propeptide.

The protein belongs to the reaction center PufL/M/PsbA/D family. PSII is composed of 1 copy each of membrane proteins PsbA, PsbB, PsbC, PsbD, PsbE, PsbF, PsbH, PsbI, PsbJ, PsbK, PsbL, PsbM, PsbT, PsbX, PsbY, PsbZ, Psb30/Ycf12, at least 3 peripheral proteins of the oxygen-evolving complex and a large number of cofactors. It forms dimeric complexes. The D1/D2 heterodimer binds P680, chlorophylls that are the primary electron donor of PSII, and subsequent electron acceptors. It shares a non-heme iron and each subunit binds pheophytin, quinone, additional chlorophylls, carotenoids and lipids. D1 provides most of the ligands for the Mn4-Ca-O5 cluster of the oxygen-evolving complex (OEC). There is also a Cl(-1) ion associated with D1 and D2, which is required for oxygen evolution. The PSII complex binds additional chlorophylls, carotenoids and specific lipids. is required as a cofactor. Tyr-161 forms a radical intermediate that is referred to as redox-active TyrZ, YZ or Y-Z. Post-translationally, C-terminally processed by CTPA; processing is essential to allow assembly of the oxygen-evolving complex and thus photosynthetic growth.

It localises to the plastid. Its subcellular location is the chloroplast thylakoid membrane. The catalysed reaction is 2 a plastoquinone + 4 hnu + 2 H2O = 2 a plastoquinol + O2. Photosystem II (PSII) is a light-driven water:plastoquinone oxidoreductase that uses light energy to abstract electrons from H(2)O, generating O(2) and a proton gradient subsequently used for ATP formation. It consists of a core antenna complex that captures photons, and an electron transfer chain that converts photonic excitation into a charge separation. The D1/D2 (PsbA/PsbD) reaction center heterodimer binds P680, the primary electron donor of PSII as well as several subsequent electron acceptors. The protein is Photosystem II protein D1 of Oryza nivara (Indian wild rice).